The following is a 347-amino-acid chain: Zinc-type alcohol dehydrogenase-like protein C16A3.02c (347 aa).

The protein belongs to the zinc-containing alcohol dehydrogenase family. Quinone oxidoreductase subfamily.

It is found in the golgi apparatus. It localises to the endoplasmic reticulum. In Schizosaccharomyces pombe (strain 972 / ATCC 24843) (Fission yeast), this protein is Zinc-type alcohol dehydrogenase-like protein C16A3.02c.